A 496-amino-acid chain; its full sequence is Lysine--tRNA ligase (496 aa).

Mg(2+) is bound by residues E409 and E416.

The protein belongs to the class-II aminoacyl-tRNA synthetase family. Homodimer. The cofactor is Mg(2+).

The protein resides in the cytoplasm. The enzyme catalyses tRNA(Lys) + L-lysine + ATP = L-lysyl-tRNA(Lys) + AMP + diphosphate. This chain is Lysine--tRNA ligase, found in Streptococcus mutans serotype c (strain ATCC 700610 / UA159).